A 483-amino-acid polypeptide reads, in one-letter code: Glutamyl-tRNA(Gln) amidotransferase subunit A (483 aa).

Active-site charge relay system residues include Lys-76 and Ser-151. Catalysis depends on Ser-175, which acts as the Acyl-ester intermediate.

Belongs to the amidase family. GatA subfamily. In terms of assembly, heterotrimer of A, B and C subunits.

It carries out the reaction L-glutamyl-tRNA(Gln) + L-glutamine + ATP + H2O = L-glutaminyl-tRNA(Gln) + L-glutamate + ADP + phosphate + H(+). Allows the formation of correctly charged Gln-tRNA(Gln) through the transamidation of misacylated Glu-tRNA(Gln) in organisms which lack glutaminyl-tRNA synthetase. The reaction takes place in the presence of glutamine and ATP through an activated gamma-phospho-Glu-tRNA(Gln). This chain is Glutamyl-tRNA(Gln) amidotransferase subunit A, found in Pseudomonas entomophila (strain L48).